The following is a 473-amino-acid chain: MSAKTLYEKLVESHTIRELDNEGHVLLYIDRSILNEYTSPQAFSGLRERGRTVRHPDTFLLNIDHVNPTRSQRDDLMTDPGGQLQVDYFRENAADFGITLFDVLDPRQGIEHVVAHEQGLVMPGMVIAAGDSHTTTYGAFGALGFGIGTSEIEHLLATQTLVYRKLKTMRVSVQGELPFACSAKDIVLELLERIGADGATGYAIEFVGEAISALSVEGRMTLCNMAVEAGARGAIIAPDKKVFDYIYGKPQMPVGELWQQALLEWSQLSSDADAVFDKTVAINCHDLEPKVTWGISPDQTGSITGRVPFPEQETNPLKRLALEKALHYMGLTAGMLLKDIRISHAFIGSCTNGRIEDLRAVAKVLEGRKIASHVRGIIVPGSTMVRRQAEEEGLAKIFIAAGFEWRQSGCSMCLAMNEDVLSPGDRCASGTNRNFPGRQGAGARTHLMSPAMVAAAAVAGHLVDVRSLLQAGE.

Residues cysteine 350, cysteine 410, and cysteine 413 each contribute to the [4Fe-4S] cluster site.

This sequence belongs to the aconitase/IPM isomerase family. LeuC type 1 subfamily. In terms of assembly, heterodimer of LeuC and LeuD. It depends on [4Fe-4S] cluster as a cofactor.

It carries out the reaction (2R,3S)-3-isopropylmalate = (2S)-2-isopropylmalate. The protein operates within amino-acid biosynthesis; L-leucine biosynthesis; L-leucine from 3-methyl-2-oxobutanoate: step 2/4. Its function is as follows. Catalyzes the isomerization between 2-isopropylmalate and 3-isopropylmalate, via the formation of 2-isopropylmaleate. The sequence is that of 3-isopropylmalate dehydratase large subunit 2 from Salmonella typhimurium (strain LT2 / SGSC1412 / ATCC 700720).